We begin with the raw amino-acid sequence, 312 residues long: CD-NTase-associated protein 12 (312 aa).

Positions 5-127 constitute a TIR domain; that stretch reads RLFIGSSSEE…FNGLTLARFD (123 aa).

The protein in the C-terminal section; belongs to the bacterial STING family. In terms of assembly, forms homodimers; in the presence of c-di-GMP forms filaments with an ordered array of parallel-stacked subunits.

The catalysed reaction is NAD(+) + H2O = ADP-D-ribose + nicotinamide + H(+). With respect to regulation, NAD(+) hydrolase activity is strongly stimulated by c-di-GMP, weakly by 3'3'-cGAMP, very weakly by c-di-AMP but not at all by 2'3'-cGAMP. Self-association of TIR domains is required for NADase activity. Its function is as follows. Effector protein of a CBASS antiviral system with NAD(+) hydrolase activity. CBASS (cyclic oligonucleotide-based antiphage signaling system) provides immunity against bacteriophage. The CD-NTase protein synthesizes cyclic nucleotides in response to infection; these serve as specific second messenger signals. The signals activate a diverse range of effectors, leading to bacterial cell death and thus abortive phage infection. A type I-D CBASS(GG) system. In terms of biological role, binds c-di-GMP, does not bind cUMP-AMP. Upon activation by c-di-GMP forms filaments which hydrolyze NAD(+); filament formation is required for enzyme activation. This chain is CD-NTase-associated protein 12, found in Niabella drilacis (strain DSM 25811 / CCM 8410 / CCUG 62505 / LMG 26954 / E90).